Consider the following 227-residue polypeptide: Cytochrome c oxidase subunit 2 (227 aa).

The Mitochondrial intermembrane segment spans residues 1 to 14; sequence MAYPFQLGLQDATS. The chain crosses the membrane as a helical span at residues 15 to 45; it reads PIMEELLHFHDHTLMIVFLISSLVLYIITLM. Topologically, residues 46-59 are mitochondrial matrix; the sequence is LTTKLTHTSTMDAQ. The helical transmembrane segment at 60–87 threads the bilayer; sequence EVETVWTILPAIILVLIALPSLRILYMM. The Mitochondrial intermembrane segment spans residues 88 to 227; the sequence is DEINNPSLTV…YFETWSALMV (140 aa). The Cu cation site is built by H161, C196, E198, C200, H204, and M207. Residue E198 coordinates Mg(2+). Phosphotyrosine is present on Y218.

It belongs to the cytochrome c oxidase subunit 2 family. As to quaternary structure, component of the cytochrome c oxidase (complex IV, CIV), a multisubunit enzyme composed of 14 subunits. The complex is composed of a catalytic core of 3 subunits MT-CO1, MT-CO2 and MT-CO3, encoded in the mitochondrial DNA, and 11 supernumerary subunits COX4I, COX5A, COX5B, COX6A, COX6B, COX6C, COX7A, COX7B, COX7C, COX8 and NDUFA4, which are encoded in the nuclear genome. The complex exists as a monomer or a dimer and forms supercomplexes (SCs) in the inner mitochondrial membrane with NADH-ubiquinone oxidoreductase (complex I, CI) and ubiquinol-cytochrome c oxidoreductase (cytochrome b-c1 complex, complex III, CIII), resulting in different assemblies (supercomplex SCI(1)III(2)IV(1) and megacomplex MCI(2)III(2)IV(2)). Found in a complex with TMEM177, COA6, COX18, COX20, SCO1 and SCO2. Interacts with TMEM177 in a COX20-dependent manner. Interacts with COX20. Interacts with COX16. Cu cation is required as a cofactor.

The protein resides in the mitochondrion inner membrane. The enzyme catalyses 4 Fe(II)-[cytochrome c] + O2 + 8 H(+)(in) = 4 Fe(III)-[cytochrome c] + 2 H2O + 4 H(+)(out). In terms of biological role, component of the cytochrome c oxidase, the last enzyme in the mitochondrial electron transport chain which drives oxidative phosphorylation. The respiratory chain contains 3 multisubunit complexes succinate dehydrogenase (complex II, CII), ubiquinol-cytochrome c oxidoreductase (cytochrome b-c1 complex, complex III, CIII) and cytochrome c oxidase (complex IV, CIV), that cooperate to transfer electrons derived from NADH and succinate to molecular oxygen, creating an electrochemical gradient over the inner membrane that drives transmembrane transport and the ATP synthase. Cytochrome c oxidase is the component of the respiratory chain that catalyzes the reduction of oxygen to water. Electrons originating from reduced cytochrome c in the intermembrane space (IMS) are transferred via the dinuclear copper A center (CU(A)) of subunit 2 and heme A of subunit 1 to the active site in subunit 1, a binuclear center (BNC) formed by heme A3 and copper B (CU(B)). The BNC reduces molecular oxygen to 2 water molecules using 4 electrons from cytochrome c in the IMS and 4 protons from the mitochondrial matrix. The polypeptide is Cytochrome c oxidase subunit 2 (MT-CO2) (Vulpes zerda (Fennec fox)).